A 663-amino-acid polypeptide reads, in one-letter code: Translation factor GUF1, mitochondrial (663 aa).

The transit peptide at 1-37 (MRGCLQSVRLLTTALGQSPRRPLPFAFRLPPNASRLF) directs the protein to the mitochondrion. The region spanning 65-245 (ERYRNFCIVA…TIVEQIPAPI (181 aa)) is the tr-type G domain. Residues 74–81 (AHVDHGKS), 138–142 (DTPGH), and 192–195 (NKVD) contribute to the GTP site.

Belongs to the TRAFAC class translation factor GTPase superfamily. Classic translation factor GTPase family. LepA subfamily.

It localises to the mitochondrion inner membrane. The enzyme catalyses GTP + H2O = GDP + phosphate + H(+). Functionally, promotes mitochondrial protein synthesis. May act as a fidelity factor of the translation reaction, by catalyzing a one-codon backward translocation of tRNAs on improperly translocated ribosomes. Binds to mitochondrial ribosomes in a GTP-dependent manner. In Uncinocarpus reesii (strain UAMH 1704), this protein is Translation factor GUF1, mitochondrial.